Reading from the N-terminus, the 44-residue chain is Cytochrome b559 subunit beta (44 aa).

Residues 19–35 (WLSVHALAVPTVFFIGA) traverse the membrane as a helical segment. Heme is bound at residue His-23.

The protein belongs to the PsbE/PsbF family. As to quaternary structure, heterodimer of an alpha subunit and a beta subunit. PSII is composed of 1 copy each of membrane proteins PsbA, PsbB, PsbC, PsbD, PsbE, PsbF, PsbH, PsbI, PsbJ, PsbK, PsbL, PsbM, PsbT, PsbX, PsbY, PsbZ, Psb30/Ycf12, peripheral proteins PsbO, CyanoQ (PsbQ), PsbU, PsbV and a large number of cofactors. It forms dimeric complexes. Requires heme b as cofactor.

The protein localises to the cellular thylakoid membrane. This b-type cytochrome is tightly associated with the reaction center of photosystem II (PSII). PSII is a light-driven water:plastoquinone oxidoreductase that uses light energy to abstract electrons from H(2)O, generating O(2) and a proton gradient subsequently used for ATP formation. It consists of a core antenna complex that captures photons, and an electron transfer chain that converts photonic excitation into a charge separation. This chain is Cytochrome b559 subunit beta, found in Rippkaea orientalis (strain PCC 8801 / RF-1) (Cyanothece sp. (strain PCC 8801)).